The primary structure comprises 85 residues: UPF0335 protein BH15140 (85 aa).

This sequence belongs to the UPF0335 family.

This Bartonella henselae (strain ATCC 49882 / DSM 28221 / CCUG 30454 / Houston 1) (Rochalimaea henselae) protein is UPF0335 protein BH15140.